A 274-amino-acid polypeptide reads, in one-letter code: Phloretin hydrolase (274 aa).

His123, Glu154, His251, and Glu255 together coordinate Zn(2+).

The protein belongs to the DAPG/phloretin hydrolase family. In terms of assembly, homodimer. It depends on Zn(2+) as a cofactor.

It is found in the cytoplasm. The catalysed reaction is phloretin + H2O = phloretate + 1,3,5-trihydroxybenzene + H(+). In terms of biological role, catalyzes the hydrolytic C-C cleavage of phloretin to phloroglucinol and 3-(4-hydroxyphenyl)propionic acid during flavonoid degradation. Also hydrolyzes other C-acylated phenols. The chain is Phloretin hydrolase (phy) from Eubacterium ramulus.